A 277-amino-acid polypeptide reads, in one-letter code: Phosphonates import ATP-binding protein PhnC 2 (277 aa).

The 249-residue stretch at 5-253 (IHVQGLNKTF…FLNDLYGADA (249 aa)) folds into the ABC transporter domain. 37–44 (GASGSGKS) lines the ATP pocket.

It belongs to the ABC transporter superfamily. Phosphonates importer (TC 3.A.1.9.1) family. In terms of assembly, the complex is composed of two ATP-binding proteins (PhnC), two transmembrane proteins (PhnE) and a solute-binding protein (PhnD).

It localises to the cell inner membrane. It carries out the reaction phosphonate(out) + ATP + H2O = phosphonate(in) + ADP + phosphate + H(+). Its function is as follows. Part of the ABC transporter complex PhnCDE involved in phosphonates import. Responsible for energy coupling to the transport system. In Pseudomonas savastanoi pv. phaseolicola (strain 1448A / Race 6) (Pseudomonas syringae pv. phaseolicola (strain 1448A / Race 6)), this protein is Phosphonates import ATP-binding protein PhnC 2.